A 335-amino-acid polypeptide reads, in one-letter code: Nucleoid-associated protein YejK (335 aa).

This sequence belongs to the YejK family.

The protein resides in the cytoplasm. The protein localises to the nucleoid. The chain is Nucleoid-associated protein YejK from Salmonella arizonae (strain ATCC BAA-731 / CDC346-86 / RSK2980).